Consider the following 337-residue polypeptide: Protein LEG1 homolog (337 aa).

Residues 1–20 (MAVLASWVWVLAGCFCAAVA) form the signal peptide. A glycan (N-linked (GlcNAc...) asparagine) is linked at Asn-171.

It belongs to the LEG1 family.

The protein localises to the secreted. Functionally, may be involved in early liver development. The sequence is that of Protein LEG1 homolog from Mus musculus (Mouse).